We begin with the raw amino-acid sequence, 824 residues long: Neuronal PAS domain-containing protein 2 (824 aa).

Positions M1–K10 are enriched in basic and acidic residues. Residues M1–R21 form a disordered region. Positions M1–E61 are sufficient for heterodimer formation with BMAL1, E-box binding and for the effect of NADPH. The bHLH domain occupies A9 to H59. Residues N82 to T152 enclose the PAS 1 domain. Heme b is bound by residues H119 and H171. The PAS 2 domain maps to F237–G307. The region spanning S311–A354 is the PAC domain. 4 disordered regions span residues E367 to A437, S556 to S667, Q681 to K704, and P739 to R824. Basic and acidic residues predominate over residues A378–Q390. Residues T421 to T431 are compositionally biased toward polar residues. The span at Q559–Q576 shows a compositional bias: low complexity. Residues G587–G610 show a composition bias toward polar residues. Positions M614–S636 are enriched in low complexity. Composition is skewed to polar residues over residues L645–P664 and S694–K704. A compositionally biased stretch (low complexity) spans P739 to Q760. Residues Q766–G789 are compositionally biased toward polar residues. The span at P794–R805 shows a compositional bias: pro residues. Residues R809 to R824 are compositionally biased toward low complexity.

In terms of assembly, component of the circadian clock oscillator which includes the CRY proteins, CLOCK or NPAS2, BMAL1 or BMAL2, CSNK1D and/or CSNK1E, TIMELESS and the PER proteins. Efficient DNA binding requires dimerization with another bHLH protein. Forms a heterodimer with BMAL1 and this heterodimerization is required for E-box-dependent transactivation. Interacts with NCOA3, KAT2B, CREBBP and EP300. Requires heme as cofactor.

Its subcellular location is the nucleus. Carbon monoxide (CO) and the redox state of the cell can modulate the transcriptional activity of the NPAS2-BMAL1 heterodimer. NADH and NADPH enhance the DNA-binding activity of the heterodimer whereas CO binds the heme group in NPAS2 and inhibits the DNA-binding activity of the heterodimer. Transcriptional activator which forms a core component of the circadian clock. The circadian clock, an internal time-keeping system, regulates various physiological processes through the generation of approximately 24 hour circadian rhythms in gene expression, which are translated into rhythms in metabolism and behavior. It is derived from the Latin roots 'circa' (about) and 'diem' (day) and acts as an important regulator of a wide array of physiological functions including metabolism, sleep, body temperature, blood pressure, endocrine, immune, cardiovascular, and renal function. Consists of two major components: the central clock, residing in the suprachiasmatic nucleus (SCN) of the brain, and the peripheral clocks that are present in nearly every tissue and organ system. Both the central and peripheral clocks can be reset by environmental cues, also known as Zeitgebers (German for 'timegivers'). The predominant Zeitgeber for the central clock is light, which is sensed by retina and signals directly to the SCN. The central clock entrains the peripheral clocks through neuronal and hormonal signals, body temperature and feeding-related cues, aligning all clocks with the external light/dark cycle. Circadian rhythms allow an organism to achieve temporal homeostasis with its environment at the molecular level by regulating gene expression to create a peak of protein expression once every 24 hours to control when a particular physiological process is most active with respect to the solar day. Transcription and translation of core clock components (CLOCK, NPAS2, BMAL1, BMAL2, PER1, PER2, PER3, CRY1 and CRY2) plays a critical role in rhythm generation, whereas delays imposed by post-translational modifications (PTMs) are important for determining the period (tau) of the rhythms (tau refers to the period of a rhythm and is the length, in time, of one complete cycle). A diurnal rhythm is synchronized with the day/night cycle, while the ultradian and infradian rhythms have a period shorter and longer than 24 hours, respectively. Disruptions in the circadian rhythms contribute to the pathology of cardiovascular diseases, cancer, metabolic syndromes and aging. A transcription/translation feedback loop (TTFL) forms the core of the molecular circadian clock mechanism. Transcription factors, CLOCK or NPAS2 and BMAL1 or BMAL2, form the positive limb of the feedback loop, act in the form of a heterodimer and activate the transcription of core clock genes and clock-controlled genes (involved in key metabolic processes), harboring E-box elements (5'-CACGTG-3') within their promoters. The core clock genes: PER1/2/3 and CRY1/2 which are transcriptional repressors form the negative limb of the feedback loop and interact with the CLOCK|NPAS2-BMAL1|BMAL2 heterodimer inhibiting its activity and thereby negatively regulating their own expression. This heterodimer also activates nuclear receptors NR1D1/2 and RORA/B/G, which form a second feedback loop and which activate and repress BMAL1 transcription, respectively. The NPAS2-BMAL1 heterodimer positively regulates the expression of MAOA, F7 and LDHA and modulates the circadian rhythm of daytime contrast sensitivity by regulating the rhythmic expression of adenylate cyclase type 1 (ADCY1) in the retina. NPAS2 plays an important role in sleep homeostasis and in maintaining circadian behaviors in normal light/dark and feeding conditions and in the effective synchronization of feeding behavior with scheduled food availability. Regulates the gene transcription of key metabolic pathways in the liver and is involved in DNA damage response by regulating several cell cycle and DNA repair genes. Controls the circadian rhythm of NR0B2 expression by binding rhythmically to its promoter. Mediates the diurnal variation in the expression of GABARA1 receptor in the brain and contributes to the regulation of anxiety-like behaviors and GABAergic neurotransmission in the ventral striatum. The polypeptide is Neuronal PAS domain-containing protein 2 (NPAS2) (Homo sapiens (Human)).